Here is a 1021-residue protein sequence, read N- to C-terminus: 2-oxoglutarate dehydrogenase complex component E1 (1021 aa).

The transit peptide at 1–40 directs the protein to the mitochondrion; the sequence is MFNLRTCASKLRPLTASQTIRSLKHNRPAAPRTFQQFRCL. The Ca(2+) site is built by His142, Asp155, and Asp157. 4 residues coordinate thiamine diphosphate: Arg311, Asp410, Asn443, and Ile445. Mg(2+) contacts are provided by Asp410, Asn443, and Ile445. A Glycyl lysine isopeptide (Lys-Gly) (interchain with G-Cter in ubiquitin) cross-link involves residue Lys533. Gln675 is a thiamine diphosphate binding site.

It belongs to the alpha-ketoglutarate dehydrogenase family. In terms of assembly, homodimer. The 2-oxoglutarate dehydrogenase complex is composed of OGDH (2-oxoglutarate dehydrogenase; E1), DLST (dihydrolipoamide succinyltransferase; E2) and DLD (dihydrolipoamide dehydrogenase; E3). It contains multiple copies of the three enzymatic components (E1, E2 and E3). In the nucleus, the 2-oxoglutarate dehydrogenase complex associates with kat2a. Thiamine diphosphate is required as a cofactor. Requires Mg(2+) as cofactor. In terms of tissue distribution, expressed in the brain.

It is found in the mitochondrion. Its subcellular location is the nucleus. It carries out the reaction N(6)-[(R)-lipoyl]-L-lysyl-[protein] + 2-oxoglutarate + H(+) = N(6)-[(R)-S(8)-succinyldihydrolipoyl]-L-lysyl-[protein] + CO2. Calcium ions and ADP stimulate, whereas ATP and NADH reduce catalytic activity. Its function is as follows. 2-oxoglutarate dehydrogenase (E1o) component of the 2-oxoglutarate dehydrogenase complex (OGDHC). Participates in the first step, rate limiting for the overall conversion of 2-oxoglutarate to succinyl-CoA and CO(2) catalyzed by the whole OGDHC. Catalyzes the irreversible decarboxylation of 2-oxoglutarate (alpha-ketoglutarate) via the thiamine diphosphate (ThDP) cofactor and subsequent transfer of the decarboxylated acyl intermediate on an oxidized dihydrolipoyl group that is covalently amidated to the E2 enzyme (dihydrolipoyllysine-residue succinyltransferase or DLST). Plays a key role in the Krebs (citric acid) cycle, which is a common pathway for oxidation of fuel molecules, including carbohydrates, fatty acids, and amino acids. Can catalyze the decarboxylation of 2-oxoadipate in vitro, but at a much lower rate than 2-oxoglutarate. Mainly active in the mitochondrion. A fraction of the 2-oxoglutarate dehydrogenase complex also localizes in the nucleus and is required for lysine succinylation of histones: associates with KAT2A on chromatin and provides succinyl-CoA to histone succinyltransferase KAT2A. The protein is 2-oxoglutarate dehydrogenase complex component E1 (ogdh) of Xenopus laevis (African clawed frog).